The primary structure comprises 206 residues: Large ribosomal subunit protein uL4 (206 aa).

It belongs to the universal ribosomal protein uL4 family. As to quaternary structure, part of the 50S ribosomal subunit.

One of the primary rRNA binding proteins, this protein initially binds near the 5'-end of the 23S rRNA. It is important during the early stages of 50S assembly. It makes multiple contacts with different domains of the 23S rRNA in the assembled 50S subunit and ribosome. Functionally, forms part of the polypeptide exit tunnel. This is Large ribosomal subunit protein uL4 from Nitrobacter winogradskyi (strain ATCC 25391 / DSM 10237 / CIP 104748 / NCIMB 11846 / Nb-255).